The sequence spans 161 residues: MARQKKYSGKGGARKKNKQKQNVAPRRRVEFKYKGFSLEELQEMPIKKFMEIVPSRQRRTMARGITPKQRKLVMKIKKARRLTNRGKDARVIRTHCRDFVITPEMIGLTFGIYNGKEFKEIKLVEETVGRFLGEMAPTRGVVQHGSPGMGATRGSMFVPIK.

A compositionally biased stretch (basic residues) spans 1 to 19; the sequence is MARQKKYSGKGGARKKNKQ. Residues 1–26 form a disordered region; that stretch reads MARQKKYSGKGGARKKNKQKQNVAPR.

This sequence belongs to the universal ribosomal protein uS19 family.

Functionally, protein S19 forms a complex with S13 that binds strongly to the 16S ribosomal RNA. The chain is Small ribosomal subunit protein uS19 from Methanococcus maripaludis (strain DSM 14266 / JCM 13030 / NBRC 101832 / S2 / LL).